Here is a 100-residue protein sequence, read N- to C-terminus: Urease subunit gamma (100 aa).

Belongs to the urease gamma subunit family. In terms of assembly, heterotrimer of UreA (gamma), UreB (beta) and UreC (alpha) subunits. Three heterotrimers associate to form the active enzyme.

It is found in the cytoplasm. The catalysed reaction is urea + 2 H2O + H(+) = hydrogencarbonate + 2 NH4(+). It functions in the pathway nitrogen metabolism; urea degradation; CO(2) and NH(3) from urea (urease route): step 1/1. This chain is Urease subunit gamma, found in Frankia alni (strain DSM 45986 / CECT 9034 / ACN14a).